A 198-amino-acid polypeptide reads, in one-letter code: GTP-binding protein RHO1 (198 aa).

16–23 (GDGACGKT) is a GTP binding site. The Effector region motif lies at 38–46 (YVPTVFENY). GTP contacts are provided by residues 63 to 67 (DTAGQ) and 121 to 124 (CKSD). The residue at position 195 (cysteine 195) is a Cysteine methyl ester. Cysteine 195 carries the S-geranylgeranyl cysteine lipid modification. The propeptide at 196-198 (VVL) is removed in mature form.

It belongs to the small GTPase superfamily. Rho family.

It localises to the cell membrane. The sequence is that of GTP-binding protein RHO1 (RHO1) from Candida albicans (strain SC5314 / ATCC MYA-2876) (Yeast).